Consider the following 226-residue polypeptide: Urease accessory protein UreF (226 aa).

The protein belongs to the UreF family. In terms of assembly, ureD, UreF and UreG form a complex that acts as a GTP-hydrolysis-dependent molecular chaperone, activating the urease apoprotein by helping to assemble the nickel containing metallocenter of UreC. The UreE protein probably delivers the nickel.

It localises to the cytoplasm. In terms of biological role, required for maturation of urease via the functional incorporation of the urease nickel metallocenter. This is Urease accessory protein UreF from Corynebacterium glutamicum (strain R).